The primary structure comprises 417 residues: Serine hydroxymethyltransferase (417 aa).

Residues L121 and 125–127 (GHL) contribute to the (6S)-5,6,7,8-tetrahydrofolate site. K229 is modified (N6-(pyridoxal phosphate)lysine). 355-357 (SPF) is a (6S)-5,6,7,8-tetrahydrofolate binding site.

Belongs to the SHMT family. Homodimer. Pyridoxal 5'-phosphate is required as a cofactor.

The protein resides in the cytoplasm. It catalyses the reaction (6R)-5,10-methylene-5,6,7,8-tetrahydrofolate + glycine + H2O = (6S)-5,6,7,8-tetrahydrofolate + L-serine. Its pathway is one-carbon metabolism; tetrahydrofolate interconversion. It participates in amino-acid biosynthesis; glycine biosynthesis; glycine from L-serine: step 1/1. Functionally, catalyzes the reversible interconversion of serine and glycine with tetrahydrofolate (THF) serving as the one-carbon carrier. This reaction serves as the major source of one-carbon groups required for the biosynthesis of purines, thymidylate, methionine, and other important biomolecules. Also exhibits THF-independent aldolase activity toward beta-hydroxyamino acids, producing glycine and aldehydes, via a retro-aldol mechanism. This chain is Serine hydroxymethyltransferase, found in Xylella fastidiosa (strain M23).